The chain runs to 447 residues: MSASATNGTHYEQLHQGRTKMYKSKVDVVLGAQWGDEGKGKVVDMLASDVDIVCRCQGGNNAGHTVVANGTEFDFHLLPSGVVNEKCVSVIGNGVVIHLPSLFDEVLKNEAKGLQHLENRLIISDRAHLVFDFHQHVDGMQEAEKGGKSLGTTKKGIGPAYSSKATRNGIRVGELLGDFNLFSEKFKSIVATHVRLFPSINVDVEAELARYKDYADKVRPYVKDTICFLHTALRNGKTILVEGANAAMLDIDFGTYPYVTSSNCSIGGVLTGLGLPPQTIGEVIGVVKAYTTRVGDGPFPTEQLNDIGDLLQTRGFEIGVTTKRKRRCGWLDIPLLKYTSLVNGYTCICVTKLDILDTLPEIKVAVAYKKPSGEKLDHFPGTIAELGNIEVEYAVLPGWQTSTEDVRNFKELPENAQSYVRFLESELSVPVRWVGVGKGRESIINVH.

GTP-binding positions include 35 to 41 (GDEGKGK) and 63 to 65 (GHT). The Proton acceptor role is filled by Asp36. Residues Asp36 and Gly63 each contribute to the Mg(2+) site. Residues 36 to 39 (DEGK), 61 to 64 (NAGH), Thr153, Arg167, Asn245, Thr260, and Arg324 each bind IMP. His64 functions as the Proton donor in the catalytic mechanism. A substrate-binding site is contributed by 320 to 326 (VTTKRKR). GTP-binding positions include Arg326, 352 to 354 (KLD), and 435 to 437 (GVG).

The protein belongs to the adenylosuccinate synthetase family. In terms of assembly, homodimer. It depends on Mg(2+) as a cofactor.

The protein localises to the cytoplasm. The enzyme catalyses IMP + L-aspartate + GTP = N(6)-(1,2-dicarboxyethyl)-AMP + GDP + phosphate + 2 H(+). The protein operates within purine metabolism; AMP biosynthesis via de novo pathway; AMP from IMP: step 1/2. Functionally, plays an important role in the de novo pathway and in the salvage pathway of purine nucleotide biosynthesis. Catalyzes the first committed step in the biosynthesis of AMP from IMP. The chain is Adenylosuccinate synthetase from Drosophila erecta (Fruit fly).